The chain runs to 90 residues: Co-chaperonin GroES (90 aa).

Belongs to the GroES chaperonin family. As to quaternary structure, heptamer of 7 subunits arranged in a ring. Interacts with the chaperonin GroEL.

The protein resides in the cytoplasm. Together with the chaperonin GroEL, plays an essential role in assisting protein folding. The GroEL-GroES system forms a nano-cage that allows encapsulation of the non-native substrate proteins and provides a physical environment optimized to promote and accelerate protein folding. GroES binds to the apical surface of the GroEL ring, thereby capping the opening of the GroEL channel. This Borreliella afzelii (strain PKo) (Borrelia afzelii) protein is Co-chaperonin GroES.